Here is a 492-residue protein sequence, read N- to C-terminus: MANDQDPNKSLINDALTRSMSEFYDDDDDNDSDMCRANDEGEDVFDLPLKVGVSQSRNFSEVNDVLDPLSSLHGPSKKVRFEQQKQQQQHQQLHNDFNTDFNLKSPSSKKMGVEQLIQSANEINDYLANNIDKVNSFNSELLSGSGKLPGRVKSDTATQGTGRLDSMSNFALSDTELDNDDDNYLLDPLANASSTTPTVEHHGYSLLDKALSTSDKEKIYTNKVNSNSQIDTDNHSHESGNTTNNETDENESSEILDYTKFDSFPYPPSSAPNGEPPDLKVLSIECEQENEKELRRISLLLDHYESIPKIPELSDDEALSKFRENIELILQLSKKINDNANTLAISSEDPQKFVNFVMKNPPSLSFRDFIDRIQNKCMFGAVVYLGATYLLQLVFLTRDEMDGPIKLKAKLQEDQAHRIIISTIRIATKLLEDFVHSQNYICKVFGISKRLLTKLEISFMASVNFDGLMITCEKLEKTLHILDDTRQALGNT.

Disordered stretches follow at residues 1-32 (MAND…DNDS), 143-163 (SGSG…GTGR), and 223-252 (KVNS…ENES). A compositionally biased stretch (polar residues) spans 8–20 (NKSLINDALTRSM). The segment covering 23 to 32 (FYDDDDDNDS) has biased composition (acidic residues). Position 32 is a phosphoserine (Ser32).

It belongs to the cyclin family. PHO80 subfamily. As to quaternary structure, forms a cyclin-CDK complex with PHO85.

The protein resides in the cytoplasm. The protein localises to the nucleus. Its function is as follows. Cyclin partner of the cyclin-dependent kinase (CDK) PHO85. Together with cyclin PCL10, negatively controls glycogen accumulation under favorable growth conditions. Involved in phosphorylation and negative regulation of glycogen synthase GSY2. Also has minor GLC8 kinase activity. The polypeptide is PHO85 cyclin-8 (PCL8) (Saccharomyces cerevisiae (strain ATCC 204508 / S288c) (Baker's yeast)).